Consider the following 204-residue polypeptide: DNA-directed RNA polymerase III subunit RPC8 (204 aa).

The tract at residues 158 to 178 is disordered; the sequence is VDTSPTGPSSAEAASSSEELP. Positions 166–175 are enriched in low complexity; sequence SSAEAASSSE.

The protein belongs to the eukaryotic RPB7/RPC8 RNA polymerase subunit family. As to quaternary structure, component of the RNA polymerase III complex consisting of 17 subunits: a ten-subunit horseshoe-shaped catalytic core composed of POLR3A/RPC1, POLR3B/RPC2, POLR1C/RPAC1, POLR1D/RPAC2, POLR3K/RPC10, POLR2E/RPABC1, POLR2F/RPABC2, POLR2H/RPABC3, POLR2K/RPABC4 and POLR2L/RPABC5; a mobile stalk composed of two subunits POLR3H/RPC8 and CRCP/RPC9, protruding from the core and functioning primarily in transcription initiation; and additional subunits homologous to general transcription factors of the RNA polymerase II machinery, POLR3C/RPC3-POLR3F/RPC6-POLR3G/RPC7 heterotrimer required for transcription initiation and POLR3D/RPC4-POLR3E/RPC5 heterodimer involved in both transcription initiation and termination. Interacts with CRCP/RPC9. POLR3H/RPC8 and CRCP/RPC9 probably form a Pol III subcomplex.

The protein localises to the nucleus. In terms of biological role, DNA-dependent RNA polymerase catalyzes the transcription of DNA into RNA using the four ribonucleoside triphosphates as substrates. Specific peripheric component of RNA polymerase III (Pol III) which synthesizes small non-coding RNAs including 5S rRNA, snRNAs, tRNAs and miRNAs from at least 500 distinct genomic loci. With CRCP/RPC9 forms a mobile stalk that protrudes from Pol III core and functions primarily in transcription initiation. Pol III plays a key role in sensing and limiting infection by intracellular bacteria and DNA viruses. Acts as nuclear and cytosolic DNA sensor involved in innate immune response. Can sense non-self dsDNA that serves as template for transcription into dsRNA. The non-self RNA polymerase III transcripts, such as Epstein-Barr virus-encoded RNAs (EBERs) induce type I interferon and NF-kappa-B through the RIG-I pathway. The protein is DNA-directed RNA polymerase III subunit RPC8 (POLR3H) of Bos taurus (Bovine).